Consider the following 460-residue polypeptide: Phosphomethylpyrimidine synthase (460 aa).

Substrate-binding positions include Asn-80, Met-109, Tyr-139, His-175, 195-197, 236-239, and Glu-275; these read SRG and DSLR. Residue His-279 participates in Zn(2+) binding. Tyr-302 contacts substrate. His-343 lines the Zn(2+) pocket. 3 residues coordinate [4Fe-4S] cluster: Cys-423, Cys-426, and Cys-431.

This sequence belongs to the ThiC family. It depends on [4Fe-4S] cluster as a cofactor.

It catalyses the reaction 5-amino-1-(5-phospho-beta-D-ribosyl)imidazole + S-adenosyl-L-methionine = 4-amino-2-methyl-5-(phosphooxymethyl)pyrimidine + CO + 5'-deoxyadenosine + formate + L-methionine + 3 H(+). It participates in cofactor biosynthesis; thiamine diphosphate biosynthesis. In terms of biological role, catalyzes the synthesis of the hydroxymethylpyrimidine phosphate (HMP-P) moiety of thiamine from aminoimidazole ribotide (AIR) in a radical S-adenosyl-L-methionine (SAM)-dependent reaction. The protein is Phosphomethylpyrimidine synthase of Microcystis aeruginosa (strain NIES-843 / IAM M-2473).